Consider the following 35-residue polypeptide: Beta-theraphotoxin-Hlv1a (35 aa).

3 disulfide bridges follow: C2–C17, C9–C24, and C16–C31.

It belongs to the neurotoxin 10 (Hwtx-1) family. 10 (haplotoxin-1) subfamily. In terms of tissue distribution, expressed by the venom gland.

Its subcellular location is the secreted. Spider venom neurotoxin that blocks voltage-gated sodium channel Nav1.3/SCN3A in human (IC(50)=1 uM) and rat (IC(50)=1 uM). The protein is Beta-theraphotoxin-Hlv1a of Cyriopagopus lividus (Cobalt blue tarantula).